Here is a 1242-residue protein sequence, read N- to C-terminus: Myosin-16 (1242 aa).

Residues 6–55 form the Myosin N-terminal SH3-like domain; the sequence is MVDSHVWVEDPERAWIDGVVLNIKGEEAEIKTNDGRDVIANLSRLYPKDT. Residues 60–729 enclose the Myosin motor domain; the sequence is EGVEDMTRLS…QMAELDAHRT (670 aa). ATP contacts are provided by residues 154 to 161 and 207 to 215; these read GESGSGKT and NNNSSRFGK. 4 actin-binding regions span residues 493–527, 529–552, 587–610, and 610–632; these read LIEKKPGGIIALLDEACMLPKSTPETFSEKLYHTF, DHKRFMKPKLTRSDFTLVHYAGDV, FPPLPKESSKSKFSSIGARFKLQL, and LQQLMETLNSTEPHYIRCVKPNN. IQ domains lie at 732-761, 755-784, 780-809, 803-832, 828-857, and 851-880; these read LGESARMIQGQVRTRLTRERFVLMRRASVN, MRRASVNIQANWRGNIARKISKEMRREEAA, REEAAIKIQKNLRRQIAKKDYGKTKSSALT, TKSSALTLQSGVRTMAARHEFRYKLTTRAA, TTRAATVIQAYWRGYSAISDYKKLKRVSLL, and LKRVSLLCKSNLRGRIARKQLGQSKQADRK. Disordered regions lie at residues 869-893 and 908-1042; these read KQLGQSKQADRKEETEKERKVELSN and EQSD…ERKT. The segment covering 876–893 has biased composition (basic and acidic residues); that stretch reads QADRKEETEKERKVELSN. 6 repeat units span residues 876–908, 909–940, 941–965, 966–997, 998–1029, and 1030–1061. A 6 X 33 AA repeats of Q-S-D-D-x-E-E-x(2)-H-x-R-K-x-K-x(2)-I-x(2)-E-D-G-x(3)-S-x-V-x-H-S-x region spans residues 876–1061; it reads QADRKEETEK…IQKSFVTCSE (186 aa). Residues 948–966 are compositionally biased toward basic and acidic residues; that stretch reads GHERKTKLSIESEDGHSDQ. Positions 1079 to 1142 form a coiled coil; sequence DTEIESLTAE…QLQDSLNRLL (64 aa). The interval 1175-1242 is disordered; the sequence is DLADSSENSE…DKEGGFEDYF (68 aa). The segment covering 1179–1191 has biased composition (low complexity); it reads SSENSEASSSDSD. Residues 1199 to 1224 show a composition bias toward polar residues; sequence PSSDNFSTFNPNQLQVIVQDLSTTEA. A compositionally biased stretch (basic and acidic residues) spans 1225 to 1242; sequence KGTESYDSDKEGGFEDYF.

The protein belongs to the TRAFAC class myosin-kinesin ATPase superfamily. Myosin family. Plant myosin class XI subfamily. Homodimer. Expressed in flowers and leaves.

Its subcellular location is the cytoplasm. Functionally, myosin heavy chain that is required for the cell cycle-regulated transport of various organelles and proteins for their segregation. Functions by binding with its tail domain to receptor proteins on organelles and exerting force with its N-terminal motor domain against actin filaments, thereby transporting its cargo along polarized actin cables. The sequence is that of Myosin-16 (XI-J) from Arabidopsis thaliana (Mouse-ear cress).